Reading from the N-terminus, the 176-residue chain is Protein MAL2 (176 aa).

Residues 1 to 34 (MSAGGASVPPPPNPAVSFPPPRVTLPAGPDILRT) are Cytoplasmic-facing. Residues 31-175 (ILRTYSGAFV…SLGLALRRWR (145 aa)) enclose the MARVEL domain. A helical membrane pass occupies residues 35-55 (YSGAFVCLEILFGGLVWILVA). The Lumenal segment spans residues 56–66 (SSNVPLPLLQG). The helical transmembrane segment at 67-87 (WVMFVSVTAFFFSLLFLGMFL) threads the bilayer. At 88-102 (SGMVAQIDANWNFLD) the chain is on the cytoplasmic side. The helical transmembrane segment at 103–123 (FAYHFTVFVFYFGAFLLEAAA) threads the bilayer. Residues 124–149 (TSLHDLHCNTTITGQPLLSDNQYNIN) lie on the Lumenal side of the membrane. An N-linked (GlcNAc...) asparagine glycan is attached at N132. A helical transmembrane segment spans residues 150–170 (VAASIFAFMTTACYGCSLGLA). At 171-176 (LRRWRP) the chain is on the cytoplasmic side.

Belongs to the MAL family. In terms of assembly, interacts with TPD52L2. Predominantly expressed in kidney, lung, and liver. Also found in thyroid gland, stomach and, at lower levels in testis and small intestine.

It localises to the cell membrane. It is found in the apical cell membrane. The protein resides in the endomembrane system. The protein localises to the cytoplasm. Its subcellular location is the perinuclear region. In terms of biological role, member of the machinery of polarized transport. Required for the indirect transcytotic route at the step of the egress of the transcytosing cargo from perinuclear endosomes in order for it to travel to the apical surface via a raft-dependent pathway. The chain is Protein MAL2 (MAL2) from Homo sapiens (Human).